The sequence spans 1937 residues: Myosin-2 (1937 aa).

Residues 33–82 (DAKTSVFVAEPKESFVKGTIQSREGGKVTVKTDAGATLTVKEDQVFPMNP) enclose the Myosin N-terminal SH3-like domain. Residues threonine 64 and threonine 69 each carry the phosphothreonine modification. Positions 86–780 (DKIEDMAMMT…LLGLLEEMRD (695 aa)) constitute a Myosin motor domain. Lysine 130 carries the N6,N6,N6-trimethyllysine modification. 179-186 (GESGAGKT) is a binding site for ATP. The residue at position 387 (tyrosine 387) is a Phosphotyrosine. Threonine 417 is modified (phosphothreonine). Serine 623 bears the Phosphoserine mark. The interval 657–679 (LNKLMTNLRSTHPHFVRCIIPNE) is actin-binding. Histidine 755 bears the Pros-methylhistidine mark. An actin-binding region spans residues 759-773 (KFGHTKVFFKAGLLG). The 30-residue stretch at 783–812 (LAQIITRTQARCRGFLARVEYQKMVERRES) folds into the IQ domain. Positions 841-1937 (LLKSAETEKE…EVHTKIISEE (1097 aa)) form a coiled coil. Serine 1094 carries the post-translational modification Phosphoserine. Disordered stretches follow at residues 1124–1145 (IEAERASRAKAEKQRSDLSREL) and 1151–1170 (RLEEAGGATSAQIEMNKKRE). Basic and acidic residues predominate over residues 1126–1145 (AERASRAKAEKQRSDLSREL). 2 positions are modified to phosphoserine: serine 1160 and serine 1235. Position 1239 is a phosphothreonine (threonine 1239). Serine 1241 bears the Phosphoserine mark. Threonine 1253 is modified (phosphothreonine). Serine 1259 carries the post-translational modification Phosphoserine. At threonine 1284 the chain carries Phosphothreonine. A phosphoserine mark is found at serine 1290, serine 1301, and serine 1304. Tyrosine 1462 carries the post-translational modification Phosphotyrosine. At threonine 1465 the chain carries Phosphothreonine. A Phosphoserine modification is found at serine 1472. Tyrosine 1490 carries the phosphotyrosine modification. Residue serine 1493 is modified to Phosphoserine. Residue threonine 1499 is modified to Phosphothreonine. Serine 1512 carries the phosphoserine modification. At threonine 1515 the chain carries Phosphothreonine. Phosphoserine is present on residues serine 1540, serine 1552, serine 1572, serine 1712, and serine 1724. Phosphothreonine is present on residues threonine 1728 and threonine 1734. At serine 1737 the chain carries Phosphoserine. The tract at residues 1883–1913 (QAEEAEEQSNTNLSKFRKLQHELEEAEERAD) is disordered.

It belongs to the TRAFAC class myosin-kinesin ATPase superfamily. Myosin family. Muscle myosin is a hexameric protein that consists of 2 heavy chain subunits (MHC), 2 alkali light chain subunits (MLC) and 2 regulatory light chain subunits (MLC-2). Interacts with GCSAM.

It localises to the cytoplasm. Its subcellular location is the myofibril. In terms of biological role, myosins are actin-based motor molecules with ATPase activity essential for muscle contraction. The protein is Myosin-2 (MYH2) of Equus caballus (Horse).